Consider the following 282-residue polypeptide: Tetraspanin-6 (282 aa).

The Cytoplasmic segment spans residues 1 to 7; it reads MYRFSNT. The helical transmembrane segment at 8-28 threads the bilayer; sequence VIGVLNLLTLLASIPIIGTAL. Residues 29–44 lie on the Extracellular side of the membrane; sequence YKARSSTTCENFLQTP. Residues 45–65 form a helical membrane-spanning segment; it reads LLVIGFIILIVSLAGFIGACF. Over 66–74 the chain is Cytoplasmic; that stretch reads NVAWALWVY. Residues 75–95 traverse the membrane as a helical segment; it reads LVVMIFLIATLMGLTLFGLVV. Residues 96 to 220 are Extracellular-facing; the sequence is TSQGGGVEVP…EIRLDWRKLS (125 aa). Residues 221 to 241 traverse the membrane as a helical segment; it reads VVNILVLVLLIAVYAAGCCAF. Residues 242–282 are Cytoplasmic-facing; sequence HNTRHAAHPYHPSDDNRMTRVRPRWDYYWWRWWHEKKEQLY.

It belongs to the tetraspanin (TM4SF) family.

The protein resides in the membrane. Its function is as follows. May be involved in the regulation of cell differentiation. This chain is Tetraspanin-6 (TET6), found in Arabidopsis thaliana (Mouse-ear cress).